A 503-amino-acid polypeptide reads, in one-letter code: Probable cytosol aminopeptidase (503 aa).

Lysine 274 and aspartate 279 together coordinate Mn(2+). Lysine 286 is a catalytic residue. Mn(2+)-binding residues include aspartate 297, aspartate 356, and glutamate 358. Residue arginine 360 is part of the active site.

The protein belongs to the peptidase M17 family. Mn(2+) is required as a cofactor.

The protein resides in the cytoplasm. It carries out the reaction Release of an N-terminal amino acid, Xaa-|-Yaa-, in which Xaa is preferably Leu, but may be other amino acids including Pro although not Arg or Lys, and Yaa may be Pro. Amino acid amides and methyl esters are also readily hydrolyzed, but rates on arylamides are exceedingly low.. The catalysed reaction is Release of an N-terminal amino acid, preferentially leucine, but not glutamic or aspartic acids.. Functionally, presumably involved in the processing and regular turnover of intracellular proteins. Catalyzes the removal of unsubstituted N-terminal amino acids from various peptides. This is Probable cytosol aminopeptidase from Burkholderia pseudomallei (strain 1106a).